The primary structure comprises 414 residues: CinA-like protein (414 aa).

This sequence belongs to the CinA family.

This is CinA-like protein from Geobacter sp. (strain M21).